A 307-amino-acid polypeptide reads, in one-letter code: Ribosomal protein L11 methyltransferase (307 aa).

Residues Thr144, Gly165, Asp187, and Asn235 each coordinate S-adenosyl-L-methionine.

It belongs to the methyltransferase superfamily. PrmA family.

The protein localises to the cytoplasm. The catalysed reaction is L-lysyl-[protein] + 3 S-adenosyl-L-methionine = N(6),N(6),N(6)-trimethyl-L-lysyl-[protein] + 3 S-adenosyl-L-homocysteine + 3 H(+). In terms of biological role, methylates ribosomal protein L11. This is Ribosomal protein L11 methyltransferase from Psychrobacter sp. (strain PRwf-1).